The following is a 241-amino-acid chain: Ras-like protein 1 (241 aa).

GTP is bound by residues 17-22 (GVGKTA), 33-39 (VETYDPT), 63-64 (AG), 138-141 (NKSD), and 168-170 (SAK). The short motif at 36 to 44 (YDPTIEDSY) is the Effector region element. A disordered region spans residues 190–241 (RQQASRPSLPGNSRTKTGGMGKSESFYQSDGKRGSRKDGEKHRSKPIKCVIL). The span at 191–205 (QQASRPSLPGNSRTK) shows a compositional bias: polar residues. The span at 219–230 (DGKRGSRKDGEK) shows a compositional bias: basic and acidic residues. Residue Cys238 is modified to Cysteine methyl ester. A lipid anchor (S-farnesyl cysteine) is attached at Cys238. The propeptide at 239-241 (VIL) is removed in mature form.

This sequence belongs to the small GTPase superfamily. Ras family. Interacts with farnesyltransferase beta subunit RAM1.

It is found in the cell membrane. With respect to regulation, alternates between an inactive form bound to GDP and an active form bound to GTP. Activated by a guanine nucleotide-exchange factor (GEF) and inactivated by a GTPase-activating protein (GAP). Its function is as follows. Modulates the activity of the adenylate cyclase catalytic subunit and therefore affects the biosynthesis of cyclic-AMP. Plays a role in both surface attachment and surface recognition of appressoria, a highly specialized infection structure for plant penetration. Regulates appressorium formation by coordinated regulation of cAMP signaling and Pmk1 MAPK pathways. This Pyricularia oryzae (strain 70-15 / ATCC MYA-4617 / FGSC 8958) (Rice blast fungus) protein is Ras-like protein 1.